We begin with the raw amino-acid sequence, 181 residues long: Adenine phosphoribosyltransferase (181 aa).

The protein belongs to the purine/pyrimidine phosphoribosyltransferase family. In terms of assembly, homodimer.

Its subcellular location is the cytoplasm. It catalyses the reaction AMP + diphosphate = 5-phospho-alpha-D-ribose 1-diphosphate + adenine. It participates in purine metabolism; AMP biosynthesis via salvage pathway; AMP from adenine: step 1/1. Functionally, catalyzes a salvage reaction resulting in the formation of AMP, that is energically less costly than de novo synthesis. The chain is Adenine phosphoribosyltransferase from Rhodopseudomonas palustris (strain BisB5).